Reading from the N-terminus, the 465-residue chain is Argininosuccinate lyase (465 aa).

It belongs to the lyase 1 family. Argininosuccinate lyase subfamily.

Its subcellular location is the cytoplasm. The enzyme catalyses 2-(N(omega)-L-arginino)succinate = fumarate + L-arginine. The protein operates within amino-acid biosynthesis; L-arginine biosynthesis; L-arginine from L-ornithine and carbamoyl phosphate: step 3/3. In Desulfatibacillum aliphaticivorans, this protein is Argininosuccinate lyase.